We begin with the raw amino-acid sequence, 710 residues long: Denticleless protein homolog A (710 aa).

3 WD repeats span residues Gly-47–Leu-89, Ala-96–Glu-135, and Gly-138–Phe-178. The DDB1-binding motif motif lies at Trp-168–Arg-171. The short motif at Pro-197–Lys-204 is the Nuclear localization signal element. WD repeat units follow at residues Asp-215–Arg-254, Thr-270–Val-309, Gly-314–Val-355, and Gly-359–Ser-398. The DDB1-binding motif signature appears at Trp-244 to Arg-247. 2 disordered regions span residues Gly-428–Ala-534 and Ala-652–Met-698. Residues Pro-430–Ser-450 show a composition bias toward low complexity. Polar residues-rich tracts occupy residues Thr-504–Pro-516 and Ser-659–Ser-690.

It belongs to the WD repeat cdt2 family. Component of the DCX(DTL) E3 ubiquitin ligase complex, at least composed of cul4 (cul4a or cul4b), ddb1, dtl/cdt2 and rbx1.

It is found in the nucleus. Its subcellular location is the cytoplasm. The protein resides in the cytoskeleton. The protein localises to the microtubule organizing center. It localises to the centrosome. It is found in the chromosome. It participates in protein modification; protein ubiquitination. In terms of biological role, substrate-specific adapter of a DCX (DDB1-CUL4-X-box) E3 ubiquitin-protein ligase complex required for cell cycle control, DNA damage response and translesion DNA synthesis. The DCX(DTL) complex, also named CRL4(CDT2) complex, mediates the polyubiquitination and subsequent degradation of CDT1, CDKN1A/p21(CIP1), KMT5A and SDE2. CDT1 degradation in response to DNA damage is necessary to ensure proper cell cycle regulation of DNA replication. CDKN1A/p21(CIP1) degradation during S phase or following UV irradiation is essential to control replication licensing. KMT5A degradation is also important for a proper regulation of mechanisms such as TGF-beta signaling, cell cycle progression, DNA repair and cell migration. Most substrates require their interaction with PCNA for their polyubiquitination: substrates interact with PCNA via their PIP-box, and those containing the 'K+4' motif in the PIP box, recruit the DCX(DTL) complex, leading to their degradation. In undamaged proliferating cells, the DCX(DTL) complex also promotes the 'Lys-164' monoubiquitination of PCNA, thereby being involved in PCNA-dependent translesion DNA synthesis. May play a role in the regulation of the circadian clock. This is Denticleless protein homolog A (dtl-a) from Xenopus laevis (African clawed frog).